A 431-amino-acid polypeptide reads, in one-letter code: Protein EARLY STARVATION 1, chloroplastic (431 aa).

Residues 1 to 19 constitute a chloroplast transit peptide; the sequence is MAACSRGLVARPFDLTARG. 2 disordered regions span residues 65–126 and 403–431; these read GNKP…DTGI and GVYPTIDFSASSPAPPSDDPPGMPPSPLE. The segment covering 415 to 431 has biased composition (pro residues); sequence PAPPSDDPPGMPPSPLE.

This sequence belongs to the ESV1 family.

The protein resides in the plastid. The protein localises to the chloroplast stroma. Binds preferentially to highly ordered alpha-glucans, such as starch and crystalline maltodextrins. Involved in the organization of the starch granule matrix, thus influencing starch turnover by modulating the accessibility of starch polymers to modifying and degrading enzymes. Required for the control of starch degradation in leaves and starch distribution in nonphotosynthetic parts. Promotes gravitropic responses, negative in shoots but positive in roots, by facilitating starch granules (statoliths) formation in hypocotyls and roots columella. Facilitates tight packing of starch granules in grains. This chain is Protein EARLY STARVATION 1, chloroplastic, found in Oryza sativa subsp. japonica (Rice).